A 596-amino-acid polypeptide reads, in one-letter code: Alpha-1,3-galactosidase A (596 aa).

The N-terminal stretch at 1–21 (MQNPVASLLFILAMLTGPCPA) is a signal peptide. A disordered region spans residues 23 to 57 (DYPERTERTQSAGNHVWHIDPDKGNDGNPGTAPST). PbH1 repeat units lie at residues 351–373 (RGKI…NVHG), 482–504 (RKPV…LVED), 515–537 (VRNM…QIVP), and 547–569 (HRNI…RIRH).

The protein belongs to the glycosyl hydrolase 110 family. A subfamily.

The enzyme catalyses Hydrolysis of terminal, non-reducing branched (1-&gt;3)-alpha-D-galactosidic residues, producing free D-galactose.. The catalysed reaction is Hydrolysis of terminal, non-reducing alpha-D-galactose residues in alpha-D-galactosides, including galactose oligosaccharides, galactomannans and galactolipids.. Alpha-galactosidase that specifically removes branched alpha-1,3-linked galactose residues present in blood group B antigens. Has no activity toward linear alpha-1,3-linked galactose residues. In Akkermansia muciniphila (strain ATCC BAA-835 / DSM 22959 / JCM 33894 / BCRC 81048 / CCUG 64013 / CIP 107961 / Muc), this protein is Alpha-1,3-galactosidase A (glaA).